The following is a 541-amino-acid chain: Chaperonin GroEL, cyanelle (541 aa).

Residues 29-32 (TLGP), 86-90 (DGTTT), Gly413, 479-481 (NAA), and Asp495 each bind ATP.

This sequence belongs to the chaperonin (HSP60) family. As to quaternary structure, forms a cylinder of 14 subunits composed of two heptameric rings stacked back-to-back. Interacts with the co-chaperonin GroES.

The protein localises to the plastid. It localises to the cyanelle. The catalysed reaction is ATP + H2O + a folded polypeptide = ADP + phosphate + an unfolded polypeptide.. Together with its co-chaperonin GroES, plays an essential role in assisting protein folding. The GroEL-GroES system forms a nano-cage that allows encapsulation of the non-native substrate proteins and provides a physical environment optimized to promote and accelerate protein folding. This Cyanophora paradoxa protein is Chaperonin GroEL, cyanelle.